The sequence spans 172 residues: Regulator of hemoglobinization and erythroid cell expansion protein (172 aa).

The helical transmembrane segment at 9–29 (WHGLVIAVVSLFLQACFLTAI) threads the bilayer. The interval 52–106 (VPRPSPGHHHPPAVKEMKETQTERDIPMSDSLYRHDSDTPSDSLDSSCSSPPACQ) is disordered. Residues 64–89 (AVKEMKETQTERDIPMSDSLYRHDSD) show a composition bias toward basic and acidic residues. Over residues 91-103 (PSDSLDSSCSSPP) the composition is skewed to low complexity. Tyr-132 and Tyr-141 each carry phosphotyrosine.

In terms of assembly, interacts with EPOR; this interaction occurs in a erythropoietin (EPO)-dependent manner. Interacts with JAK2; this interaction occurs in a erythropoietin (EPO)-dependent manner. Interacts (via tyrosine-phosphorylated form) with GRB2. In terms of processing, phosphorylated. Phosphorylation on Tyr-132 and Tyr-141 occurs in a erythropoietin (EPO)-dependent manner. In terms of tissue distribution, expressed in the proerythroblasts (at protein level). Expressed strongly in the kidney. Expressed weakly in the pancreas, liver and lung. Expressed strongly in erythroid progenitor cells (EPCs). Expressed weakly in T-cells and neutrophils.

It is found in the cell membrane. Its function is as follows. Acts as a signaling transduction factor of the EPO-EPOR signaling pathway promoting erythroid cell differentiation. In Homo sapiens (Human), this protein is Regulator of hemoglobinization and erythroid cell expansion protein.